The following is a 149-amino-acid chain: Protein TraJ (149 aa).

The protein localises to the cell membrane. This protein is essential for positively regulating the expression of transfer genes that are involved in the conjugal transfer of DNA between bacterial cells. The chain is Protein TraJ (traJ) from Escherichia coli.